We begin with the raw amino-acid sequence, 348 residues long: Beta-hexosaminidase (348 aa).

Substrate contacts are provided by residues D64, R72, R138, and 168 to 169 (KH). H181 (proton donor/acceptor) is an active-site residue. Catalysis depends on D252, which acts as the Nucleophile.

Belongs to the glycosyl hydrolase 3 family. NagZ subfamily.

Its subcellular location is the cytoplasm. The catalysed reaction is Hydrolysis of terminal non-reducing N-acetyl-D-hexosamine residues in N-acetyl-beta-D-hexosaminides.. The protein operates within cell wall biogenesis; peptidoglycan recycling. Functionally, plays a role in peptidoglycan recycling by cleaving the terminal beta-1,4-linked N-acetylglucosamine (GlcNAc) from peptide-linked peptidoglycan fragments, giving rise to free GlcNAc, anhydro-N-acetylmuramic acid and anhydro-N-acetylmuramic acid-linked peptides. The polypeptide is Beta-hexosaminidase (Alkalilimnicola ehrlichii (strain ATCC BAA-1101 / DSM 17681 / MLHE-1)).